The chain runs to 549 residues: Chaperonin GroEL 1 (549 aa).

Residues 30 to 33, lysine 51, 87 to 91, glycine 415, 479 to 481, and aspartate 495 each bind ATP; these read TLGP, DGTTT, and NAA.

The protein belongs to the chaperonin (HSP60) family. As to quaternary structure, forms a cylinder of 14 subunits composed of two heptameric rings stacked back-to-back. Interacts with the co-chaperonin GroES.

It localises to the cytoplasm. It catalyses the reaction ATP + H2O + a folded polypeptide = ADP + phosphate + an unfolded polypeptide.. Its function is as follows. Together with its co-chaperonin GroES, plays an essential role in assisting protein folding. The GroEL-GroES system forms a nano-cage that allows encapsulation of the non-native substrate proteins and provides a physical environment optimized to promote and accelerate protein folding. The protein is Chaperonin GroEL 1 of Azoarcus sp. (strain BH72).